The chain runs to 484 residues: Sperm motility kinase 1 (484 aa).

The 249-residue stretch at 8 to 256 (YEMLETIGQG…VAEVMVHPWI (249 aa)) folds into the Protein kinase domain. ATP contacts are provided by residues 14-22 (IGQGGCAKV) and lysine 37. Aspartate 127 functions as the Proton acceptor in the catalytic mechanism. The UBA domain occupies 274-314 (KPDPAIVKPMGHIGFQAQDIEDSLRQRKFNETMASYCLLKK). The span at 423–434 (IDESTEGHTSAS) shows a compositional bias: polar residues. A disordered region spans residues 423-447 (IDESTEGHTSASAEDKPVHSRGWPR).

It belongs to the protein kinase superfamily. Tyr protein kinase family. Smok subfamily. In terms of tissue distribution, testis-specific. Expressed in the testis from 22 days postpartum (22 dpp).

It carries out the reaction L-seryl-[protein] + ATP = O-phospho-L-seryl-[protein] + ADP + H(+). The enzyme catalyses L-threonyl-[protein] + ATP = O-phospho-L-threonyl-[protein] + ADP + H(+). Its function is as follows. May play a role in sperm motility, especially in the regulation of flagellar function. In Mus musculus (Mouse), this protein is Sperm motility kinase 1 (Smok1).